The sequence spans 530 residues: Pyridoxine/pyridoxamine 5'-phosphate oxidase 1, chloroplastic (530 aa).

A chloroplast-targeting transit peptide spans 1–64 (MRNVIRRVTT…TLCTKVIIPN (64 aa)). N-acetylmethionine is present on Met65. Residues 81–297 (AAEIDETLMG…SVAEKYKLEL (217 aa)) enclose the YjeF N-terminal domain. 131–135 (NNGGD) contacts (6S)-NADPHX. Residues Asn132 and Asp196 each contribute to the K(+) site. (6S)-NADPHX-binding positions include 200–206 (GFSFHGA) and Asp238. Ser241 contributes to the K(+) binding site. 247 to 250 (EGDH) is a pyridoxal 5'-phosphate binding site. 321-324 (RVNY) is a substrate binding site. Pyridoxal 5'-phosphate is bound at residue 325 to 327 (VSP). 374-377 (RMVL) provides a ligand contact to FMN. Lys379 contributes to the pyridoxal 5'-phosphate binding site. FMN contacts are provided by residues 389–390 (FT), 395–396 (KK), and Gln418. The pyridoxal 5'-phosphate site is built by Tyr436, Arg440, and Ser444. FMN-binding positions include 453–454 (QS) and Trp499. Pyridoxal 5'-phosphate is bound at residue 505–507 (RLH). An FMN-binding site is contributed by Arg509.

It in the N-terminal section; belongs to the NnrE/AIBP family. The protein in the C-terminal section; belongs to the pyridoxamine 5'-phosphate oxidase family. Homodimer. The cofactor is FMN. K(+) serves as cofactor. In terms of tissue distribution, expressed in leaves, stems, flowers and roots.

Its subcellular location is the plastid. It is found in the chloroplast. It catalyses the reaction pyridoxamine 5'-phosphate + O2 + H2O = pyridoxal 5'-phosphate + H2O2 + NH4(+). The catalysed reaction is pyridoxine 5'-phosphate + O2 = pyridoxal 5'-phosphate + H2O2. The enzyme catalyses (6R)-NADHX = (6S)-NADHX. It carries out the reaction (6R)-NADPHX = (6S)-NADPHX. It participates in cofactor metabolism; pyridoxal 5'-phosphate salvage; pyridoxal 5'-phosphate from pyridoxamine 5'-phosphate: step 1/1. The protein operates within cofactor metabolism; pyridoxal 5'-phosphate salvage; pyridoxal 5'-phosphate from pyridoxine 5'-phosphate: step 1/1. Catalyzes the oxidation of either pyridoxine 5'-phosphate (PNP) or pyridoxamine 5'-phosphate (PMP) into pyridoxal 5'-phosphate (PLP). Involved in the PLP salvage pathway. Has a higher preference for PNP over PMP. May also catalyze the epimerization of the S- and R-forms of NAD(P)HX, a damaged form of NAD(P)H that is a result of enzymatic or heat-dependent hydration. This is a prerequisite for the S-specific NAD(P)H-hydrate dehydratase to allow the repair of both epimers of NAD(P)HX. This chain is Pyridoxine/pyridoxamine 5'-phosphate oxidase 1, chloroplastic (PPOX1), found in Arabidopsis thaliana (Mouse-ear cress).